A 160-amino-acid polypeptide reads, in one-letter code: Dr hemagglutinin structural subunit (160 aa).

The first 21 residues, 1-21 (MKKLAIMAAASMVFAVSSAHA), serve as a signal peptide directing secretion. The segment at 22 to 75 (GFTPSGTTGTTKLTVTEECQVRVGDLTVAKTRGQLTDAAPIGPVTVQALGCDAR) is receptor-binding.

The protein belongs to the Dr-adhesin family.

It is found in the fimbrium. Its function is as follows. Hemagglutinins of uropathogenic E.coli mediate adherence to the upper urinary tract. These adhesins bind to the Dr blood group antigen and also agglutinate human erythrocytes in the presence of D-mannose (mannose-resistant hemagglutination (MRHA)). The protein is Dr hemagglutinin structural subunit (draA) of Escherichia coli.